We begin with the raw amino-acid sequence, 498 residues long: Diacylglycerol O-acyltransferase 1A (498 aa).

The tract at residues 1 to 67 (MAISDEPETV…ANSQPQQKQD (67 aa)) is disordered. 7 helical membrane passes run 102-122 (HAGL…RLII), 146-166 (WPLF…FIVE), 178-198 (VVVV…VLVI), 203-223 (SAFL…LKLV), 253-273 (YPYN…TLCY), 295-315 (LIIF…PIVQ), and 342-362 (VWLC…AELL). An FYXDWWN motif motif is present at residues 369–375 (FYQDWWN). 3 helical membrane passes run 410–430 (AVAL…CIAV), 432–452 (CHIF…LVFI), and 465–485 (VGNM…CVLL). Histidine 424 is a catalytic residue.

This sequence belongs to the membrane-bound acyltransferase family. Sterol o-acyltransferase subfamily. As to expression, highly expressed in flowers and pods. Expressed at low levels in roots, stems and leaves.

Its subcellular location is the endoplasmic reticulum membrane. The catalysed reaction is an acyl-CoA + a 1,2-diacyl-sn-glycerol = a triacyl-sn-glycerol + CoA. Its pathway is glycerolipid metabolism; triacylglycerol biosynthesis. In terms of biological role, major contributor to triacylglycerol (TAG) synthesis and oil accumulation in developing seeds. Catalyzes the acylation of the sn-3 hydroxy group of sn-1,2-diacylglycerol using acyl-CoA. Has a marked preference for oleoyl-CoA (18:1) and sn-1,2-dioleoylglycerol over vernoloyl-CoA and sn-1,2-divernoloylglycerol. Can use oleoyl-CoA, linoleoyl-CoA and linolenoyl-CoA as substrates. This is Diacylglycerol O-acyltransferase 1A from Glycine max (Soybean).